The chain runs to 128 residues: Small ribosomal subunit protein uS12 (128 aa).

D89 is subject to 3-methylthioaspartic acid. The tract at residues 101 to 128 (SLDTSGVADRRNGRSKYGAKRPKEGAKK) is disordered.

Belongs to the universal ribosomal protein uS12 family. Part of the 30S ribosomal subunit. Contacts proteins S8 and S17. May interact with IF1 in the 30S initiation complex.

Its function is as follows. With S4 and S5 plays an important role in translational accuracy. Functionally, interacts with and stabilizes bases of the 16S rRNA that are involved in tRNA selection in the A site and with the mRNA backbone. Located at the interface of the 30S and 50S subunits, it traverses the body of the 30S subunit contacting proteins on the other side and probably holding the rRNA structure together. The combined cluster of proteins S8, S12 and S17 appears to hold together the shoulder and platform of the 30S subunit. This Chloroherpeton thalassium (strain ATCC 35110 / GB-78) protein is Small ribosomal subunit protein uS12.